A 428-amino-acid polypeptide reads, in one-letter code: Serine--tRNA ligase (428 aa).

235-237 contacts L-serine; the sequence is TAE. 266–268 contributes to the ATP binding site; it reads RYE. Glutamate 289 lines the L-serine pocket. 353 to 356 contributes to the ATP binding site; sequence EVSS. Serine 389 is an L-serine binding site.

The protein belongs to the class-II aminoacyl-tRNA synthetase family. Type-1 seryl-tRNA synthetase subfamily. As to quaternary structure, homodimer. The tRNA molecule binds across the dimer.

It is found in the cytoplasm. It catalyses the reaction tRNA(Ser) + L-serine + ATP = L-seryl-tRNA(Ser) + AMP + diphosphate + H(+). It carries out the reaction tRNA(Sec) + L-serine + ATP = L-seryl-tRNA(Sec) + AMP + diphosphate + H(+). It participates in aminoacyl-tRNA biosynthesis; selenocysteinyl-tRNA(Sec) biosynthesis; L-seryl-tRNA(Sec) from L-serine and tRNA(Sec): step 1/1. Functionally, catalyzes the attachment of serine to tRNA(Ser). Is also able to aminoacylate tRNA(Sec) with serine, to form the misacylated tRNA L-seryl-tRNA(Sec), which will be further converted into selenocysteinyl-tRNA(Sec). This Blochmanniella pennsylvanica (strain BPEN) protein is Serine--tRNA ligase.